The primary structure comprises 305 residues: Auxin-responsive protein IAA27 (305 aa).

Positions 45 to 49 (LRLGL) match the EAR-like (transcriptional repression) motif. 2 disordered regions span residues 96-119 (TTAT…GKST) and 155-180 (KNSM…AKSG). Positions 155–170 (KNSMASSQSQKPGNNS) are enriched in polar residues. The 103-residue stretch at 185–287 (CLYVKVSMEG…SCKKLRIMKS (103 aa)) folds into the PB1 domain.

It belongs to the Aux/IAA family. In terms of assembly, homodimers and heterodimers. Interacts with phytochrome A. Interacts with TPL.

The protein localises to the nucleus. In terms of biological role, aux/IAA proteins are short-lived transcriptional factors that function as repressors of early auxin response genes at low auxin concentrations. Repression is thought to result from the interaction with auxin response factors (ARFs), proteins that bind to the auxin-responsive promoter element (AuxRE). Formation of heterodimers with ARF proteins may alter their ability to modulate early auxin response genes expression. The sequence is that of Auxin-responsive protein IAA27 (IAA27) from Arabidopsis thaliana (Mouse-ear cress).